A 257-amino-acid polypeptide reads, in one-letter code: NH(3)-dependent NAD(+) synthetase (257 aa).

An ATP-binding site is contributed by 40 to 47; it reads GISGGIDS. Asp46 is a binding site for Mg(2+). Arg121 provides a ligand contact to deamido-NAD(+). Thr141 serves as a coordination point for ATP. Glu146 is a binding site for Mg(2+). Residues Lys154 and Asp161 each coordinate deamido-NAD(+). The ATP site is built by Lys170 and Ser192. Residue 238–239 participates in deamido-NAD(+) binding; that stretch reads HK.

The protein belongs to the NAD synthetase family. As to quaternary structure, homodimer.

It carries out the reaction deamido-NAD(+) + NH4(+) + ATP = AMP + diphosphate + NAD(+) + H(+). The protein operates within cofactor biosynthesis; NAD(+) biosynthesis; NAD(+) from deamido-NAD(+) (ammonia route): step 1/1. Its function is as follows. Catalyzes the ATP-dependent amidation of deamido-NAD to form NAD. Uses ammonia as a nitrogen source. The polypeptide is NH(3)-dependent NAD(+) synthetase (Mycoplasmopsis pulmonis (strain UAB CTIP) (Mycoplasma pulmonis)).